The following is a 305-amino-acid chain: tRNA dimethylallyltransferase (305 aa).

An ATP-binding site is contributed by 8–15 (GPTASGKT). 10–15 (TASGKT) contributes to the substrate binding site. Positions 33–36 (DSQQ) are interaction with substrate tRNA.

The protein belongs to the IPP transferase family. In terms of assembly, monomer. Mg(2+) serves as cofactor.

The catalysed reaction is adenosine(37) in tRNA + dimethylallyl diphosphate = N(6)-dimethylallyladenosine(37) in tRNA + diphosphate. Catalyzes the transfer of a dimethylallyl group onto the adenine at position 37 in tRNAs that read codons beginning with uridine, leading to the formation of N6-(dimethylallyl)adenosine (i(6)A). The sequence is that of tRNA dimethylallyltransferase from Anaeromyxobacter dehalogenans (strain 2CP-1 / ATCC BAA-258).